Reading from the N-terminus, the 73-residue chain is Toxin Td5 (73 aa).

The N-terminal stretch at Ile-1–Cys-7 is a signal peptide. The LCN-type CS-alpha/beta domain occupies Lys-8–Arg-70. 4 cysteine pairs are disulfide-bonded: Cys-18-Cys-69, Cys-22-Cys-44, Cys-30-Cys-50, and Cys-34-Cys-52. Residue Arg-70 is modified to Arginine amide.

It belongs to the long (4 C-C) scorpion toxin superfamily. Sodium channel inhibitor family. Beta subfamily. In terms of tissue distribution, expressed by the venom gland.

The protein resides in the secreted. In terms of biological role, beta toxins bind voltage-independently at site-4 of sodium channels (Nav) and shift the voltage of activation toward more negative potentials thereby affecting sodium channel activation and promoting spontaneous and repetitive firing. In Tityus discrepans (Venezuelan scorpion), this protein is Toxin Td5.